Consider the following 67-residue polypeptide: Arasin 2 (67 aa).

A signal peptide spans 1 to 25; sequence MERRTLLVVLLVCSCVVAAAAEASP. A disordered region spans residues 22 to 44; it reads EASPSRWPSPGRPRPFPGRPNPI. The segment covering 31 to 44 has biased composition (pro residues); it reads PGRPRPFPGRPNPI. 2 disulfide bridges follow: Cys50/Cys59 and Cys52/Cys57.

Interacts with chitin through the N-terminal region (26-48). This interaction may be important, since chitin is a component of the fungal cell wall, as well as of the crab exoskeleton (permitting a possible action of arasin in wound healing in case of lesions). Disulfide bonds are important for activity especially against Gram-negative bacteria, since the linearization of the peptide causes a strong decrease of activity on these bacteria. Mainly expressed in hemocytes. No or very low expression in heart, gills, inestines, and epidermis.

In terms of biological role, antimicrobial peptide that has a large activity spectrum with activity against Gram-positive, Gram-negative bacteria, as well as against fungi. Shows activity at micromolar concentrations. Displays minimal inhibitory concentration (MIC) values lower than minimal bactericidal concentrations (MBC). May have a dual mode of action depending on the peptide concentrations. At MIC concentrations, the peptide penetrates into the cytoplasm of target cells (tested on the Gram-negative E.coli). The two inner membrane proteins YgdD and SbmA may be required for this uptake. At concentrations higher than MIC, arasin may act by disrupting membranes. Does not show hemolytic activity. The sequence is that of Arasin 2 from Hyas araneus (Atlantic lyre crab).